The following is a 445-amino-acid chain: Phosphoglucosamine mutase (445 aa).

Serine 101 acts as the Phosphoserine intermediate in catalysis. Positions 101, 240, 242, and 244 each coordinate Mg(2+). Serine 101 is modified (phosphoserine).

This sequence belongs to the phosphohexose mutase family. The cofactor is Mg(2+). In terms of processing, activated by phosphorylation.

The enzyme catalyses alpha-D-glucosamine 1-phosphate = D-glucosamine 6-phosphate. Its function is as follows. Catalyzes the conversion of glucosamine-6-phosphate to glucosamine-1-phosphate. The polypeptide is Phosphoglucosamine mutase (Ectopseudomonas mendocina (strain ymp) (Pseudomonas mendocina)).